The following is a 105-amino-acid chain: ESAT-6-like protein EsxB (105 aa).

The segment at 1-23 (MSQGFKTEADVMRNTAHRVDDTN) is disordered. Over residues 7–21 (TEADVMRNTAHRVDD) the composition is skewed to basic and acidic residues.

The protein belongs to the WXG100 family. CFP-10 subfamily. As to quaternary structure, forms a tight 1:1 complex with EsxB.

The sequence is that of ESAT-6-like protein EsxB from Corynebacterium diphtheriae (strain ATCC 700971 / NCTC 13129 / Biotype gravis).